The chain runs to 207 residues: Inhibitor of hydrogen peroxide resistance (207 aa).

Residues 163–182 (MNYIHQRTRVSRSVVAEVLA) constitute a DNA-binding region (H-T-H motif).

It belongs to the IprA family.

Its function is as follows. Involved in oxidative stress resistance. The protein is Inhibitor of hydrogen peroxide resistance of Salmonella typhimurium (strain LT2 / SGSC1412 / ATCC 700720).